A 767-amino-acid chain; its full sequence is Dipeptidyl peptidase 4 (767 aa).

Residues 1 to 6 are Cytoplasmic-facing; that stretch reads MKTPWK. A helical; Signal-anchor for type II membrane protein membrane pass occupies residues 7–28; it reads VLLGLLGVAALVTIITVPVVLL. Residues 29-767 are Extracellular-facing; it reads NKDEAAADSR…HFLQQCFSLR (739 aa). N-linked (GlcNAc...) asparagine glycosylation is found at Asn-83, Asn-90, Asn-148, Asn-217, Asn-227, and Asn-319. Intrachain disulfides connect Cys-326/Cys-337, Cys-383/Cys-395, Cys-445/Cys-448, and Cys-455/Cys-473. N-linked (GlcNAc...) asparagine glycosylation is present at Asn-521. Residue Ser-631 is the Charge relay system of the active site. Cys-650 and Cys-763 form a disulfide bridge. Asn-686 carries an N-linked (GlcNAc...) asparagine glycan. Active-site charge relay system residues include Asp-709 and His-741.

The protein belongs to the peptidase S9B family. DPPIV subfamily. Monomer. Homodimer. Heterodimer with Seprase (FAP). Requires homodimerization for optimal dipeptidyl peptidase activity and T-cell costimulation. Found in a membrane raft complex, at least composed of BCL10, CARD11, DPP4 and IKBKB. Associates with collagen. Interacts with PTPRC; the interaction is enhanced in an interleukin-12-dependent manner in activated lymphocytes. Interacts (via extracellular domain) with ADA; does not inhibit its dipeptidyl peptidase activity. Interacts with CAV1 (via the N-terminus); the interaction is direct. Interacts (via cytoplasmic tail) with CARD11 (via PDZ domain); its homodimerization is necessary for interaction with CARD11. Interacts with IGF2R; the interaction is direct. Interacts with GPC3. The soluble form (Dipeptidyl peptidase 4 soluble form also named SDPP) derives from the membrane form (Dipeptidyl peptidase 4 membrane form also named MDPP) by proteolytic processing. Post-translationally, N- and O-Glycosylated. In terms of processing, phosphorylated. Mannose 6-phosphate residues in the carbohydrate moiety are necessary for interaction with IGF2R in activated T-cells. Mannose 6-phosphorylation is induced during T-cell activation. In terms of tissue distribution, expressed in bile ducts and other epithelial brush borders (small intestine, kidney, colon, pancreatic duct); acinar structures in salivary glands; endothelial structures and T cell areas in thymus, spleen and lymph node.

It is found in the secreted. It localises to the cell membrane. Its subcellular location is the apical cell membrane. The protein resides in the cell projection. The protein localises to the invadopodium membrane. It is found in the lamellipodium membrane. It localises to the cell junction. Its subcellular location is the membrane raft. The enzyme catalyses Release of an N-terminal dipeptide, Xaa-Yaa-|-Zaa-, from a polypeptide, preferentially when Yaa is Pro, provided Zaa is neither Pro nor hydroxyproline.. Its activity is regulated as follows. Inhibited by GPC3 and diprotin A. Functionally, cell surface glycoprotein receptor involved in the costimulatory signal essential for T-cell receptor (TCR)-mediated T-cell activation. Acts as a positive regulator of T-cell coactivation, by binding at least ADA, CAV1, IGF2R, and PTPRC. Its binding to CAV1 and CARD11 induces T-cell proliferation and NF-kappa-B activation in a T-cell receptor/CD3-dependent manner. Its interaction with ADA also regulates lymphocyte-epithelial cell adhesion. In association with FAP is involved in the pericellular proteolysis of the extracellular matrix (ECM), the migration and invasion of endothelial cells into the ECM. May be involved in the promotion of lymphatic endothelial cells adhesion, migration and tube formation. When overexpressed, enhanced cell proliferation, a process inhibited by GPC3. Also acts as a serine exopeptidase with a dipeptidyl peptidase activity that regulates various physiological processes by cleaving peptides in the circulation, including many chemokines, mitogenic growth factors, neuropeptides and peptide hormones. Removes N-terminal dipeptides sequentially from polypeptides having unsubstituted N-termini provided that the penultimate residue is proline. The polypeptide is Dipeptidyl peptidase 4 (Dpp4) (Rattus norvegicus (Rat)).